Reading from the N-terminus, the 136-residue chain is DNA-directed RNA polymerase subunit omega (136 aa).

It belongs to the RNA polymerase subunit omega family. In terms of assembly, the RNAP catalytic core consists of 2 alpha, 1 beta, 1 beta' and 1 omega subunit. When a sigma factor is associated with the core the holoenzyme is formed, which can initiate transcription.

The catalysed reaction is RNA(n) + a ribonucleoside 5'-triphosphate = RNA(n+1) + diphosphate. Its function is as follows. Promotes RNA polymerase assembly. Latches the N- and C-terminal regions of the beta' subunit thereby facilitating its interaction with the beta and alpha subunits. The chain is DNA-directed RNA polymerase subunit omega from Methylorubrum extorquens (strain CM4 / NCIMB 13688) (Methylobacterium extorquens).